The chain runs to 256 residues: 1-(5-phosphoribosyl)-5-[(5-phosphoribosylamino)methylideneamino] imidazole-4-carboxamide isomerase (256 aa).

Asp-8 functions as the Proton acceptor in the catalytic mechanism. Asp-129 acts as the Proton donor in catalysis.

The protein belongs to the HisA/HisF family.

Its subcellular location is the cytoplasm. It catalyses the reaction 1-(5-phospho-beta-D-ribosyl)-5-[(5-phospho-beta-D-ribosylamino)methylideneamino]imidazole-4-carboxamide = 5-[(5-phospho-1-deoxy-D-ribulos-1-ylimino)methylamino]-1-(5-phospho-beta-D-ribosyl)imidazole-4-carboxamide. It functions in the pathway amino-acid biosynthesis; L-histidine biosynthesis; L-histidine from 5-phospho-alpha-D-ribose 1-diphosphate: step 4/9. This chain is 1-(5-phosphoribosyl)-5-[(5-phosphoribosylamino)methylideneamino] imidazole-4-carboxamide isomerase, found in Synechococcus elongatus (strain ATCC 33912 / PCC 7942 / FACHB-805) (Anacystis nidulans R2).